Reading from the N-terminus, the 245-residue chain is Protein OXIDATIVE STRESS 3 LIKE 6 (245 aa).

The disordered stretch occupies residues 46-90 (QIGIGLRMSNNNNKSPEESSDSSSSIGESSENEEEEEEDDAVSCQ). The segment covering 75-86 (SENEEEEEEDDA) has biased composition (acidic residues). The Nuclear localization signal signature appears at 143 to 151 (NKRRRLVIA). The interval 203–230 (DDHRKIMMMMKNKKELMAQTRSCFCLSS) is kinase-inducible domain (KID).

The protein localises to the nucleus. Its function is as follows. Probable transcription factor. Promotes slightly the tolerance to cadmium (Cd) and to oxidizing chemicals (e.g. diamide). This Arabidopsis thaliana (Mouse-ear cress) protein is Protein OXIDATIVE STRESS 3 LIKE 6.